The chain runs to 90 residues: Small ribosomal subunit protein uS17 (90 aa).

Belongs to the universal ribosomal protein uS17 family. In terms of assembly, part of the 30S ribosomal subunit.

Its function is as follows. One of the primary rRNA binding proteins, it binds specifically to the 5'-end of 16S ribosomal RNA. This Cutibacterium acnes (strain DSM 16379 / KPA171202) (Propionibacterium acnes) protein is Small ribosomal subunit protein uS17.